The primary structure comprises 206 residues: 2-phospho-L-lactate guanylyltransferase (206 aa).

It belongs to the CofC family. As to quaternary structure, homodimer.

It carries out the reaction (2S)-2-phospholactate + GTP + H(+) = (2S)-lactyl-2-diphospho-5'-guanosine + diphosphate. It functions in the pathway cofactor biosynthesis; coenzyme F420 biosynthesis. Its function is as follows. Guanylyltransferase that catalyzes the activation of (2S)-2-phospholactate (2-PL) as (2S)-lactyl-2-diphospho-5'-guanosine, via the condensation of 2-PL with GTP. It is involved in the biosynthesis of coenzyme F420, a hydride carrier cofactor. The polypeptide is 2-phospho-L-lactate guanylyltransferase (Haloferax volcanii (strain ATCC 29605 / DSM 3757 / JCM 8879 / NBRC 14742 / NCIMB 2012 / VKM B-1768 / DS2) (Halobacterium volcanii)).